We begin with the raw amino-acid sequence, 474 residues long: 4-aminobutyrate aminotransferase (474 aa).

Positions 1–13 are enriched in polar residues; that stretch reads MSSTATVTESTHF. Residues 1–31 form a disordered region; sequence MSSTATVTESTHFFPNEPQGPSIKTETIPGP. Residue 142–143 coordinates pyridoxal 5'-phosphate; it reads GS. Arg199 contributes to the substrate binding site. Position 333 is an N6-(pyridoxal phosphate)lysine (Lys333). Thr357 contacts pyridoxal 5'-phosphate.

It belongs to the class-III pyridoxal-phosphate-dependent aminotransferase family. As to quaternary structure, homodimer. The cofactor is pyridoxal 5'-phosphate.

The protein localises to the cytoplasm. The catalysed reaction is 4-aminobutanoate + 2-oxoglutarate = succinate semialdehyde + L-glutamate. In terms of biological role, required for the degradation of gamma-aminobutyric acid (GABA), which is important for utilization of GABA as nitrogen source. Deaminates GABA to succinate-semialdehyde, which in turn is converted to succinate by the succinate semialdehyde dehydrogenase. Cannot transaminate beta-alanine (BAL). This Schizosaccharomyces pombe (strain 972 / ATCC 24843) (Fission yeast) protein is 4-aminobutyrate aminotransferase (uga1).